Here is a 180-residue protein sequence, read N- to C-terminus: Shikimate kinase (180 aa).

19–24 (GAGKTT) is an ATP binding site. Thr23 contributes to the Mg(2+) binding site. Asp41, Arg65, and Gly87 together coordinate substrate. An ATP-binding site is contributed by Arg125. A substrate-binding site is contributed by Arg144.

Belongs to the shikimate kinase family. In terms of assembly, monomer. It depends on Mg(2+) as a cofactor.

Its subcellular location is the cytoplasm. The enzyme catalyses shikimate + ATP = 3-phosphoshikimate + ADP + H(+). It functions in the pathway metabolic intermediate biosynthesis; chorismate biosynthesis; chorismate from D-erythrose 4-phosphate and phosphoenolpyruvate: step 5/7. Its function is as follows. Catalyzes the specific phosphorylation of the 3-hydroxyl group of shikimic acid using ATP as a cosubstrate. This chain is Shikimate kinase, found in Acinetobacter baumannii (strain SDF).